The following is a 965-amino-acid chain: Serine/threonine-protein kinase tousled-like 1 (965 aa).

Disordered stretches follow at residues 1–22 (MSMLSMDGIVAGGGSSSGGGER), 35–72 (PQNKALPTVQSSGSSSNHAPIVGESPLGTVSSTMATGD), 95–120 (QNSSHPSTSVMMQQVPPQNGGATRSS), 172–292 (NHQQ…KQER), 320–402 (QNQG…QSGR), and 538–576 (RKPLGIGKEPKRPQAVNSQNDSNGMQPSTSSNTNGDDAI). The segment covering 10–21 (VAGGGSSSGGGE) has biased composition (gly residues). Residues 42 to 52 (TVQSSGSSSNH) show a composition bias toward polar residues. The segment covering 172–231 (NHQQQMQQMHYHQQQQQYQQQQAQHHQMYAPQIQQQQQQPQQQSQQQSAQQPQQSSAALQ) has biased composition (low complexity). 2 stretches are compositionally biased toward polar residues: residues 233 to 244 (VNESSNLSSAGS) and 320 to 341 (QNQGSPKRQPAVQQNGSNSYDS). The segment covering 342–355 (QQQQPQMNQHEMQN) has biased composition (low complexity). A compositionally biased stretch (polar residues) spans 365 to 381 (LGVNNRGTPTPTQQQHY). Positions 382-401 (SSDSNSNSNQSPPGQGNQSG) are enriched in low complexity. Polar residues predominate over residues 552–572 (AVNSQNDSNGMQPSTSSNTNG). At S634 the chain carries Phosphoserine. The Protein kinase domain maps to 651–928 (YLMLNLLGKG…VFELAKHELF (278 aa)). ATP contacts are provided by residues 657–665 (LGKGGFSEV) and K680. Catalysis depends on D781, which acts as the Proton acceptor.

The protein belongs to the protein kinase superfamily. Ser/Thr protein kinase family. Interacts with air-2. Post-translationally, autophosphorylates in vitro. Phosphorylation on Ser-634 by air-2 enhances catalytic activity.

The protein resides in the nucleus. The catalysed reaction is L-seryl-[protein] + ATP = O-phospho-L-seryl-[protein] + ADP + H(+). It catalyses the reaction L-threonyl-[protein] + ATP = O-phospho-L-threonyl-[protein] + ADP + H(+). Its function is as follows. Essential for appropriate transcription during embryonic development. May act during transcription elongation to activate the RNA polymerase II large subunit (ama-1) by phosphorylating the Ser-2 residues of the C-terminal domain 7-residue repeats. Does not phosphorylate histone H3. The chain is Serine/threonine-protein kinase tousled-like 1 (tlk-1) from Caenorhabditis elegans.